Reading from the N-terminus, the 94-residue chain is Probable FAD-linked sulfhydryl oxidase FPV093 (94 aa).

The ERV/ALR sulfhydryl oxidase domain occupies 1-94 (MDPRYWGSSF…IDIKKVKKLI (94 aa)). A disulfide bond links cysteine 41 and cysteine 44.

The protein belongs to the poxviruses E10 family. It depends on FAD as a cofactor.

The catalysed reaction is 2 R'C(R)SH + O2 = R'C(R)S-S(R)CR' + H2O2. In terms of biological role, FAD-dependent sulfhydryl oxidase that catalyzes disulfide bond formation. The sequence is that of Probable FAD-linked sulfhydryl oxidase FPV093 from Fowlpox virus (strain NVSL) (FPV).